The chain runs to 425 residues: Glutamyl-tRNA reductase (425 aa).

Residues 49–52 (TCNR), serine 106, 111–113 (EPQ), and glutamine 117 each bind substrate. Residue cysteine 50 is the Nucleophile of the active site. 186–191 (GAGETI) serves as a coordination point for NADP(+).

Belongs to the glutamyl-tRNA reductase family. In terms of assembly, homodimer.

It carries out the reaction (S)-4-amino-5-oxopentanoate + tRNA(Glu) + NADP(+) = L-glutamyl-tRNA(Glu) + NADPH + H(+). Its pathway is porphyrin-containing compound metabolism; protoporphyrin-IX biosynthesis; 5-aminolevulinate from L-glutamyl-tRNA(Glu): step 1/2. Functionally, catalyzes the NADPH-dependent reduction of glutamyl-tRNA(Glu) to glutamate 1-semialdehyde (GSA). The chain is Glutamyl-tRNA reductase from Saccharophagus degradans (strain 2-40 / ATCC 43961 / DSM 17024).